A 429-amino-acid chain; its full sequence is Uterine milk protein (429 aa).

Residues 1 to 25 (MSHRRMQLALSLVFILCGLFNSIFC) form the signal peptide. N-linked (GlcNAc...) asparagine glycans are attached at residues N222 and N268.

This sequence belongs to the serpin family. UTMP subfamily. Glycosylated; carries the so-called mannose 6-phosphate lysosomal recognition marker on its carbohydrate chains. In terms of tissue distribution, secreted by ovine endometrium under the influence of progesterone.

This is Uterine milk protein from Ovis aries (Sheep).